The primary structure comprises 371 residues: Cytochrome b (371 aa).

4 helical membrane-spanning segments follow: residues 25 to 45, 69 to 90, 105 to 125, and 170 to 190; these read FGSM…FLAI, WIMQ…YIHI, WLSG…GYVL, and FFAL…IHII. His-75 and His-89 together coordinate heme b. 2 residues coordinate heme b: His-174 and His-188. His-193 provides a ligand contact to a ubiquinone. Transmembrane regions (helical) follow at residues 218–238, 280–300, 312–332, and 339–358; these read YKDL…LSFS, LGGT…PFTH, LSQT…WTAT, and FITI…IMNP.

Belongs to the cytochrome b family. The cytochrome bc1 complex contains 3 respiratory subunits (MT-CYB, CYC1 and UQCRFS1), 2 core proteins (UQCRC1 and UQCRC2) and probably 6 low-molecular weight proteins. The cofactor is heme b.

It is found in the mitochondrion inner membrane. Its function is as follows. Component of the ubiquinol-cytochrome c reductase complex (complex III or cytochrome b-c1 complex) that is part of the mitochondrial respiratory chain. The b-c1 complex mediates electron transfer from ubiquinol to cytochrome c. Contributes to the generation of a proton gradient across the mitochondrial membrane that is then used for ATP synthesis. This is Cytochrome b (MT-CYB) from Micrurus fulvius (Eastern coral snake).